The primary structure comprises 472 residues: uncharacterized protein (472 aa).

This sequence belongs to the AllG family.

This is an uncharacterized protein from Escherichia coli (strain K12).